The sequence spans 101 residues: Signal recognition particle 19 kDa protein (101 aa).

The protein belongs to the SRP19 family. Part of the signal recognition particle protein translocation system, which is composed of SRP and FtsY. Archaeal SRP consists of a 7S RNA molecule of 300 nucleotides and two protein subunits: SRP54 and SRP19.

It is found in the cytoplasm. In terms of biological role, involved in targeting and insertion of nascent membrane proteins into the cytoplasmic membrane. Binds directly to 7S RNA and mediates binding of the 54 kDa subunit of the SRP. The chain is Signal recognition particle 19 kDa protein from Methanosarcina mazei (strain ATCC BAA-159 / DSM 3647 / Goe1 / Go1 / JCM 11833 / OCM 88) (Methanosarcina frisia).